Consider the following 429-residue polypeptide: Enolase (429 aa).

Gln-164 serves as a coordination point for (2R)-2-phosphoglycerate. Catalysis depends on Glu-206, which acts as the Proton donor. Mg(2+) is bound by residues Asp-243, Glu-286, and Asp-313. Residues Lys-338, Arg-367, Ser-368, and Lys-389 each contribute to the (2R)-2-phosphoglycerate site. Residue Lys-338 is the Proton acceptor of the active site.

It belongs to the enolase family. In terms of assembly, homooctamer. Forms a ring-shaped particle. Mg(2+) is required as a cofactor.

The protein resides in the cytoplasm. Its subcellular location is the secreted. It is found in the cell surface. The catalysed reaction is (2R)-2-phosphoglycerate = phosphoenolpyruvate + H2O. Its pathway is carbohydrate degradation; glycolysis; pyruvate from D-glyceraldehyde 3-phosphate: step 4/5. With respect to regulation, inhibited by fluoride and phosphate. Its function is as follows. Catalyzes the reversible conversion of 2-phosphoglycerate (2-PG) into phosphoenolpyruvate (PEP). It is essential for the degradation of carbohydrates via glycolysis. The polypeptide is Enolase (Thermotoga maritima (strain ATCC 43589 / DSM 3109 / JCM 10099 / NBRC 100826 / MSB8)).